The primary structure comprises 377 residues: UPF0754 membrane protein LMHCC_0318 (377 aa).

2 consecutive transmembrane segments (helical) span residues 1 to 21 and 357 to 377; these read MSVLFTILLMAVIGGFIGAMT and YLGGILGGFIGVIQGILAMWI.

Belongs to the UPF0754 family.

It is found in the cell membrane. The chain is UPF0754 membrane protein LMHCC_0318 from Listeria monocytogenes serotype 4a (strain HCC23).